A 1943-amino-acid polypeptide reads, in one-letter code: Cadherin-86C (1943 aa).

The interval 1–102 (MASTSSSQPE…QNQQMQHHWP (102 aa)) is disordered. The Extracellular portion of the chain corresponds to 1-934 (MASTSSSQPE…TDTQYKAENK (934 aa)). N-linked (GlcNAc...) asparagine glycosylation is present at asparagine 12. The segment covering 50 to 89 (PHHHHHHHHQHHHHHRLKQHHRHHHHHHRLQHHHHHHQQQ) has biased composition (basic residues). A compositionally biased stretch (low complexity) spans 90–100 (HNHQNQQMQHH). 5 Cadherin domains span residues 238 to 366 (CSIT…PPVF), 367 to 483 (TSAP…PPYF), 484 to 600 (ENDH…APVF), 601 to 708 (EQPA…TPIF), and 709 to 832 (DKDL…SVKF). Residues asparagine 244, asparagine 419, asparagine 531, asparagine 579, asparagine 585, asparagine 612, and asparagine 645 are each glycosylated (N-linked (GlcNAc...) asparagine). The N-linked (GlcNAc...) asparagine glycan is linked to asparagine 912. The helical transmembrane segment at 935-955 (VLFWLLILLATLVALTILILL) threads the bilayer. Residues 956-1943 (LCCICSWCPL…NSGGESPQYS (988 aa)) are Cytoplasmic-facing. Disordered stretches follow at residues 1038 to 1058 (DVGRGQDIGEGDRRHIQSAEE), 1390 to 1442 (KPSR…RKRI), 1458 to 1516 (EEEE…SHNR), 1546 to 1695 (YKHS…ERNV), and 1707 to 1895 (KSSV…DDHD). A compositionally biased stretch (basic and acidic residues) spans 1047–1058 (EGDRRHIQSAEE). The segment covering 1426-1442 (IKRRRTKKRPRQPRKRI) has biased composition (basic residues). Basic and acidic residues-rich tracts occupy residues 1486–1497 (QLSDESRKDQSR) and 1507–1516 (HRSESDSHNR). A compositionally biased stretch (acidic residues) spans 1552 to 1568 (DFDEDDTEYSIDSDGDE). Over residues 1580 to 1602 (QENERYRRQERTYAEPENPVDRK) the composition is skewed to basic and acidic residues. Residues 1633-1667 (KQTSSEPPHNRVSISKYESTVTENGRKLMSTSTEI) show a composition bias toward polar residues. Residues 1709-1724 (SVSGRTSTESSKSQPS) show a composition bias toward low complexity. Composition is skewed to basic and acidic residues over residues 1754 to 1764 (TGGRYKPEPAP), 1774 to 1793 (LLKEDRALNKQHKPKIETDT), 1800 to 1810 (HSEHRFERENA), and 1837 to 1863 (KESKSGRESKTSKEAKPKPSPIRENEV). A compositionally biased stretch (polar residues) spans 1879-1889 (HPTQKQLNAST).

In terms of tissue distribution, as cell intercalation proceeds, a row of stigmatophore cells surrounding the spiracular chamber show expression of Cad86C. Expression is regulated by the Abd-B cascade, requiring sal. Expressed in a broad region of the morphogenetic furrow and in clusters of cells posterior to the morphogenetic furrow. Weakly expressed in the epithelium of wing imaginal disks. In eye imaginal disk cells within the morphogenetic furrow, expression is localized to the apical region.

It localises to the cell membrane. Functionally, cadherins are calcium-dependent cell adhesion proteins. They preferentially interact with themselves in a homophilic manner in connecting cells. The polypeptide is Cadherin-86C (Cad86C) (Drosophila melanogaster (Fruit fly)).